A 203-amino-acid polypeptide reads, in one-letter code: Probable deoxycytidylate deaminase (203 aa).

The 137-residue stretch at 27–163 (HWDDYFMATS…PTYRASKRML (137 aa)) folds into the CMP/dCMP-type deaminase domain. His102 contributes to the Zn(2+) binding site. Glu104 acts as the Proton donor in catalysis. Residues Cys128 and Cys131 each contribute to the Zn(2+) site.

Belongs to the cytidine and deoxycytidylate deaminase family. It depends on Zn(2+) as a cofactor.

The catalysed reaction is dCMP + H2O + H(+) = dUMP + NH4(+). In terms of biological role, supplies the nucleotide substrate for thymidylate synthetase. In Drosophila melanogaster (Fruit fly), this protein is Probable deoxycytidylate deaminase.